The sequence spans 130 residues: Protein ApaG (130 aa).

Residues 3-127 (SEVTRSIRVT…FSLDSPHGRS (125 aa)) form the ApaG domain.

The protein is Protein ApaG of Rhodospirillum centenum (strain ATCC 51521 / SW).